The chain runs to 180 residues: ATP synthase subunit delta (180 aa).

Belongs to the ATPase delta chain family. F-type ATPases have 2 components, F(1) - the catalytic core - and F(0) - the membrane proton channel. F(1) has five subunits: alpha(3), beta(3), gamma(1), delta(1), epsilon(1). F(0) has three main subunits: a(1), b(2) and c(10-14). The alpha and beta chains form an alternating ring which encloses part of the gamma chain. F(1) is attached to F(0) by a central stalk formed by the gamma and epsilon chains, while a peripheral stalk is formed by the delta and b chains.

It is found in the cell membrane. F(1)F(0) ATP synthase produces ATP from ADP in the presence of a proton or sodium gradient. F-type ATPases consist of two structural domains, F(1) containing the extramembraneous catalytic core and F(0) containing the membrane proton channel, linked together by a central stalk and a peripheral stalk. During catalysis, ATP synthesis in the catalytic domain of F(1) is coupled via a rotary mechanism of the central stalk subunits to proton translocation. In terms of biological role, this protein is part of the stalk that links CF(0) to CF(1). It either transmits conformational changes from CF(0) to CF(1) or is implicated in proton conduction. This is ATP synthase subunit delta from Ligilactobacillus salivarius (strain UCC118) (Lactobacillus salivarius).